The primary structure comprises 312 residues: Methionyl-tRNA formyltransferase (312 aa).

112-115 (SLLP) contributes to the (6S)-5,6,7,8-tetrahydrofolate binding site.

It belongs to the Fmt family.

The enzyme catalyses L-methionyl-tRNA(fMet) + (6R)-10-formyltetrahydrofolate = N-formyl-L-methionyl-tRNA(fMet) + (6S)-5,6,7,8-tetrahydrofolate + H(+). Its function is as follows. Attaches a formyl group to the free amino group of methionyl-tRNA(fMet). The formyl group appears to play a dual role in the initiator identity of N-formylmethionyl-tRNA by promoting its recognition by IF2 and preventing the misappropriation of this tRNA by the elongation apparatus. The sequence is that of Methionyl-tRNA formyltransferase from Dehalococcoides mccartyi (strain ATCC BAA-2266 / KCTC 15142 / 195) (Dehalococcoides ethenogenes (strain 195)).